The sequence spans 351 residues: Glycerol-1-phosphate dehydrogenase [NAD(P)+] (351 aa).

Residues 93–97 and 115–118 each bind NAD(+); these read GKVLD and TTAS. D120 contacts substrate. S124 is an NAD(+) binding site. D167 is a binding site for substrate. Positions 167 and 247 each coordinate Zn(2+). A substrate-binding site is contributed by H251. H263 serves as a coordination point for Zn(2+).

It belongs to the glycerol-1-phosphate dehydrogenase family. The cofactor is Zn(2+).

Its subcellular location is the cytoplasm. It catalyses the reaction sn-glycerol 1-phosphate + NAD(+) = dihydroxyacetone phosphate + NADH + H(+). The catalysed reaction is sn-glycerol 1-phosphate + NADP(+) = dihydroxyacetone phosphate + NADPH + H(+). The protein operates within membrane lipid metabolism; glycerophospholipid metabolism. Catalyzes the NAD(P)H-dependent reduction of dihydroxyacetonephosphate (DHAP or glycerone phosphate) to glycerol 1-phosphate (G1P). The G1P thus generated is used as the glycerophosphate backbone of phospholipids in the cellular membranes of Archaea. The sequence is that of Glycerol-1-phosphate dehydrogenase [NAD(P)+] from Archaeoglobus fulgidus (strain ATCC 49558 / DSM 4304 / JCM 9628 / NBRC 100126 / VC-16).